Reading from the N-terminus, the 472-residue chain is Proline--tRNA ligase (472 aa).

Belongs to the class-II aminoacyl-tRNA synthetase family. ProS type 3 subfamily. Homodimer.

Its subcellular location is the cytoplasm. The enzyme catalyses tRNA(Pro) + L-proline + ATP = L-prolyl-tRNA(Pro) + AMP + diphosphate. Catalyzes the attachment of proline to tRNA(Pro) in a two-step reaction: proline is first activated by ATP to form Pro-AMP and then transferred to the acceptor end of tRNA(Pro). The chain is Proline--tRNA ligase from Ureaplasma parvum serovar 3 (strain ATCC 27815 / 27 / NCTC 11736).